The primary structure comprises 270 residues: Putative pyruvate, phosphate dikinase regulatory protein (270 aa).

153-160 (GVSRTSKT) provides a ligand contact to ADP.

It belongs to the pyruvate, phosphate/water dikinase regulatory protein family. PDRP subfamily.

It catalyses the reaction N(tele)-phospho-L-histidyl/L-threonyl-[pyruvate, phosphate dikinase] + ADP = N(tele)-phospho-L-histidyl/O-phospho-L-threonyl-[pyruvate, phosphate dikinase] + AMP + H(+). It carries out the reaction N(tele)-phospho-L-histidyl/O-phospho-L-threonyl-[pyruvate, phosphate dikinase] + phosphate + H(+) = N(tele)-phospho-L-histidyl/L-threonyl-[pyruvate, phosphate dikinase] + diphosphate. In terms of biological role, bifunctional serine/threonine kinase and phosphorylase involved in the regulation of the pyruvate, phosphate dikinase (PPDK) by catalyzing its phosphorylation/dephosphorylation. This Halalkalibacterium halodurans (strain ATCC BAA-125 / DSM 18197 / FERM 7344 / JCM 9153 / C-125) (Bacillus halodurans) protein is Putative pyruvate, phosphate dikinase regulatory protein.